The following is a 282-amino-acid chain: NAD-dependent protein deacetylase 1 (282 aa).

In terms of domain architecture, Deacetylase sirtuin-type spans 1-282 (MTVGRAESPE…ADELSPLPTH (282 aa)). NAD(+)-binding positions include 25 to 45 (GAGISTDSGIPDYRGPESPPS) and 101 to 104 (QNVD). Residue histidine 119 is the Proton acceptor of the active site. 4 residues coordinate Zn(2+): cysteine 127, cysteine 130, cysteine 181, and cysteine 184. NAD(+)-binding positions include 221-223 (GSS), 247-249 (NRG), and cysteine 265.

This sequence belongs to the sirtuin family. Class II subfamily. Requires Zn(2+) as cofactor.

The protein resides in the cytoplasm. It catalyses the reaction N(6)-acetyl-L-lysyl-[protein] + NAD(+) + H2O = 2''-O-acetyl-ADP-D-ribose + nicotinamide + L-lysyl-[protein]. In terms of biological role, NAD-dependent protein deacetylase which modulates the activities of several enzymes which are inactive in their acetylated form. The sequence is that of NAD-dependent protein deacetylase 1 from Mycobacterium avium (strain 104).